Here is a 79-residue protein sequence, read N- to C-terminus: UPF0175 protein APE_0890a.1 (79 aa).

It belongs to the UPF0175 family.

This chain is UPF0175 protein APE_0890a.1, found in Aeropyrum pernix (strain ATCC 700893 / DSM 11879 / JCM 9820 / NBRC 100138 / K1).